A 1235-amino-acid polypeptide reads, in one-letter code: Major DNA-binding protein (1235 aa).

The tract at residues 536–584 is disordered; that stretch reads GGLDGKGDDGVPGGGAGGGGGRDVSGGPSDGLGGGRGGGGGGDSGGMMG. Over residues 545 to 584 the composition is skewed to gly residues; that stretch reads GVPGGGAGGGGGRDVSGGPSDGLGGGRGGGGGGDSGGMMG. The Required for filament formation motif lies at 846–847; that stretch reads FW. Positions 1214 to 1226 are enriched in gly residues; the sequence is GVGGSSGGGGGSG. Residues 1214-1235 form a disordered region; it reads GVGGSSGGGGGSGLLPAKRSRL. The interval 1232–1235 is required for nuclear localization; sequence RSRL.

Belongs to the herpesviridae major DNA-binding protein family. Homooligomers. Forms double-helical filaments necessary for the formation of replication compartments within the host nucleus. Interacts with the origin-binding protein. Interacts with the helicase primase complex; this interaction stimulates primer synthesis activity of the helicase-primase complex. Interacts with the DNA polymerase. Interacts with the alkaline exonuclease; this interaction increases its nuclease processivity.

It localises to the host nucleus. In terms of biological role, plays several crucial roles in viral infection. Participates in the opening of the viral DNA origin to initiate replication by interacting with the origin-binding protein. May disrupt loops, hairpins and other secondary structures present on ssDNA to reduce and eliminate pausing of viral DNA polymerase at specific sites during elongation. Promotes viral DNA recombination by performing strand-transfer, characterized by the ability to transfer a DNA strand from a linear duplex to a complementary single-stranded DNA circle. Can also catalyze the renaturation of complementary single strands. Additionally, reorganizes the host cell nucleus, leading to the formation of prereplicative sites and replication compartments. This process is driven by the protein which can form double-helical filaments in the absence of DNA. This is Major DNA-binding protein from Homo sapiens (Human).